The chain runs to 404 residues: Acetate kinase (404 aa).

Asparagine 7 lines the Mg(2+) pocket. Position 14 (lysine 14) interacts with ATP. Arginine 91 is a substrate binding site. Aspartate 148 functions as the Proton donor/acceptor in the catalytic mechanism. ATP-binding positions include 208–212 and 283–285; these read HLGNG and DLR. Glutamate 388 serves as a coordination point for Mg(2+).

It belongs to the acetokinase family. As to quaternary structure, homodimer. Mg(2+) is required as a cofactor. Requires Mn(2+) as cofactor.

The protein localises to the cytoplasm. The catalysed reaction is acetate + ATP = acetyl phosphate + ADP. It participates in metabolic intermediate biosynthesis; acetyl-CoA biosynthesis; acetyl-CoA from acetate: step 1/2. Its function is as follows. Catalyzes the formation of acetyl phosphate from acetate and ATP. Can also catalyze the reverse reaction. This is Acetate kinase from Borrelia turicatae (strain 91E135).